The following is a 541-amino-acid chain: Transmembrane protein 87A (541 aa).

An N-terminal signal peptide occupies residues 1–26 (MAAASFQPLKCLLLWVFFVITPPVKA). Residues 27-209 (VPEPGIWTVP…HGFISASDWP (183 aa)) lie on the Lumenal side of the membrane. 4 N-linked (GlcNAc...) asparagine glycosylation sites follow: N52, N109, N148, and N189. 2 disulfides stabilise this stretch: C65–C116 and C82–C416. Residues 210-230 (LMIFYMVMCIMYILLALLWFI) traverse the membrane as a helical segment. Residues 231–241 (WSACYWKDLLR) are Cytoplasmic-facing. The helical transmembrane segment at 242–262 (IQFWIAAVIFLGMLEKAVYYA) threads the bilayer. Residues 263 to 293 (EYQNTDNTGVSSHGLLIFAELISSIKRTLAR) lie on the Lumenal side of the membrane. Residues 294–314 (LLVTIVSLGYGIIKPRLGAVM) traverse the membrane as a helical segment. Residues 315-316 (HR) lie on the Cytoplasmic side of the membrane. The helical transmembrane segment at 317 to 337 (VVGMGVLYFVFAAVEGVMRII) threads the bilayer. The Lumenal portion of the chain corresponds to 338–344 (GAKEYDL). The helical transmembrane segment at 345-365 (VLLAGIPLALLDSGLCWWIFV) threads the bilayer. Topologically, residues 366-384 (SLAQTMKTLKLRKNTVKYS) are cytoplasmic. A helical membrane pass occupies residues 385–405 (LYRHFTNTLIFAILASIIFMI). Residues 406 to 422 (WRTKKFQLVDCQADWME) lie on the Lumenal side of the membrane. A helical membrane pass occupies residues 423-443 (LWVDDAYWRFLFFIILLVIMF). The Cytoplasmic portion of the chain corresponds to 444 to 541 (LWRPSANNQR…MTKYEMSKIE (98 aa)).

The protein belongs to the LU7TM family. TMEM87 subfamily.

It localises to the cell membrane. The protein localises to the golgi apparatus membrane. Its function is as follows. Potential monoatomic ion channel gated by mechanical force, implicated in normal touch sensitivity through the generation of mechanically activated currents. However, a direct channel activity is debated and an alternative could be that it functions as a chaperone for an unidentified mechanosensitive ion channel. Could also be involved in cell mechanosensitivity regulating cell adhesion and migration. May also be involved in retrograde transport from endosomes to the trans-Golgi network (TGN). This is Transmembrane protein 87A from Xenopus tropicalis (Western clawed frog).